A 234-amino-acid polypeptide reads, in one-letter code: MTSVASLPEQSPGYRCRSLTGAGARTSAAGPLARLLPRRRLPPPHLPARPPGGWSRNQSHQRRGPGRCWGWGRGMTRICPLCPGAPEYINSAVSSQTLSQSCTPPQSPQPDPRPLSLRVGLALPGGRLGCGEAGSANRHWFSFLFPFIHFCWSPRAAAPGVAMNGWMPARWDHQVRRDVAGARGAPPAWGQAPSPRRSVGGPQKTLKRPKACSPRSPQHTPGVFSAPEKLGRKT.

Disordered regions lie at residues 1–65 and 182–234; these read MTSV…RRGP and ARGA…GRKT.

This is an uncharacterized protein from Homo sapiens (Human).